We begin with the raw amino-acid sequence, 214 residues long: Orotate phosphoribosyltransferase (214 aa).

Lys26 serves as a coordination point for 5-phospho-alpha-D-ribose 1-diphosphate. 34 to 35 (FF) contributes to the orotate binding site. 5-phospho-alpha-D-ribose 1-diphosphate contacts are provided by residues 72–73 (YK), Arg99, Lys100, Lys103, His105, and 124–132 (DDVITAGTA). Positions 128 and 156 each coordinate orotate.

The protein belongs to the purine/pyrimidine phosphoribosyltransferase family. PyrE subfamily. Homodimer. Mg(2+) is required as a cofactor.

The enzyme catalyses orotidine 5'-phosphate + diphosphate = orotate + 5-phospho-alpha-D-ribose 1-diphosphate. The protein operates within pyrimidine metabolism; UMP biosynthesis via de novo pathway; UMP from orotate: step 1/2. Catalyzes the transfer of a ribosyl phosphate group from 5-phosphoribose 1-diphosphate to orotate, leading to the formation of orotidine monophosphate (OMP). The sequence is that of Orotate phosphoribosyltransferase from Proteus mirabilis (strain HI4320).